The primary structure comprises 548 residues: DNA ligase (548 aa).

Glutamate 252 provides a ligand contact to ATP. The active-site N6-AMP-lysine intermediate is the lysine 254. Arginine 259, arginine 274, glutamate 303, phenylalanine 343, arginine 414, and lysine 420 together coordinate ATP.

The protein belongs to the ATP-dependent DNA ligase family. Mg(2+) is required as a cofactor.

It catalyses the reaction ATP + (deoxyribonucleotide)n-3'-hydroxyl + 5'-phospho-(deoxyribonucleotide)m = (deoxyribonucleotide)n+m + AMP + diphosphate.. DNA ligase that seals nicks in double-stranded DNA during DNA replication, DNA recombination and DNA repair. The polypeptide is DNA ligase (Natronomonas pharaonis (strain ATCC 35678 / DSM 2160 / CIP 103997 / JCM 8858 / NBRC 14720 / NCIMB 2260 / Gabara) (Halobacterium pharaonis)).